The primary structure comprises 80 residues: Cell division protein ZapB (80 aa).

Residues 3-80 (FEVFEKLESK…ALLGKMEDVQ (78 aa)) are a coiled coil.

It belongs to the ZapB family. As to quaternary structure, homodimer. The ends of the coiled-coil dimer bind to each other, forming polymers. Interacts with FtsZ.

Its subcellular location is the cytoplasm. Functionally, non-essential, abundant cell division factor that is required for proper Z-ring formation. It is recruited early to the divisome by direct interaction with FtsZ, stimulating Z-ring assembly and thereby promoting cell division earlier in the cell cycle. Its recruitment to the Z-ring requires functional FtsA or ZipA. This chain is Cell division protein ZapB, found in Proteus mirabilis (strain HI4320).